Reading from the N-terminus, the 434-residue chain is Protein maelstrom homolog (434 aa).

Residues 4–73 (RRASRNAYYF…AQGKDSGPSE (70 aa)) constitute a DNA-binding region (HMG box).

The protein belongs to the maelstrom family. As to quaternary structure, interacts with SMARCB1, SIN3B and DDX4. Interacts with piRNA-associated proteins TDRD1, PIWIL1 and PIWIL2. Interacts with Tex19.1 and, probably, Tex19.2. As to expression, testis-specific. Present in spermatocytes and round and early elongating spermatids.

Its subcellular location is the cytoplasm. The protein resides in the nucleus. Plays a central role during spermatogenesis by repressing transposable elements and preventing their mobilization, which is essential for the germline integrity. Acts via the piRNA metabolic process, which mediates the repression of transposable elements during meiosis by forming complexes composed of piRNAs and Piwi proteins and governs the methylation and subsequent repression of transposons. Its association with piP-bodies suggests a participation in the secondary piRNAs metabolic process. Required for the localization of germ-cell factors to the meiotic nuage. In Mus musculus (Mouse), this protein is Protein maelstrom homolog.